A 90-amino-acid polypeptide reads, in one-letter code: Sakacin-A immunity factor (90 aa).

Imparts immunity to sakacin-A to naturally sensitive host strains. In Latilactobacillus sakei (Lactobacillus sakei), this protein is Sakacin-A immunity factor (saiA).